The following is a 1179-amino-acid chain: MSSEVFRWNFITEKLTHAKEYVPLFLFFSKKDFLDPKTGDFSFKSLKPFQQNLMKLMLWLTRAFKGSVYMCYMEQLFIGNQTTAVPPALRCTLSSDVVFIFTLDKADLWGNDGSRDGSLLDLLFKDDLDNNLRYKDRMVHAVKKLICHHLLLISKEVLYTSSNDLERERDLTDMVDWETSNYKMGAVDRKVVSAYGGMLFRLPAGNHEKFSLLTVFSAVARYFMGCEKEVDGSQVDPDFSIWISLSKFFEPSNSPVFRKFADSCGRAPVIDFLQRVHRGELSIPAHELLLFRYDPDELFNVHNFRAFENVSLYGYPHLDQSGKKCVSLDDHVRASVALGVITNCSPPSILDGVATTVIYPHLTPIIGISAAVDKSIGQRNKLFTLDLKIELFKNILLKNASKIPVEPISSIYGKLQKLLTRDRSPGLSLRHRFPMGFVCSMKSPDMAPRFMDTFMMKELFVNHMGCTRCGQAVTEFGYILYNTAPRWKQTRIMLVNYTRPGQGKTFTNSVIMGLLGPVSEIFDEISNFTATSFKYMPMTIGKVMFMDDVGFTSDQQKTIAREDNIIQNHFKCMLDKGYTNNNVTQWDATANKYGTNKIISIQNTGFVWNTNTLDPFGNALRDRSIILGPEPSTRKITAKGEGQVKAILNGKGLTELATTLFLRQQLIQTMIYTLTGEGGITSRHNEFLTDVLSVLGAHYPTFHTGSHSLARDHFKILDLAYADTIRVAITAVLDMWLPPWTVPPDFVDDETVEEYLMRLNRARLEALGEMELSSIIVEVLAQISVFLPSSIVQTATVAFNQETGAVLARVCEFLGLAMNNRQLEMVAGPHGTITINRPHMLDPHFEVDARGVFKMAKSVMILRGGERVKLIQGLKTRDGGGGEITMDGALILDLCKLVNPKIFTELWNDLIGAFEASGELTVWFLPQNVHTINILKLFHLLGTKGVYSEGDGPGFQVHRDFAGLSTELFRRGLDRDSAVNGVIPVDTSECVINLEPYAREVGGLDPSVITPDGVSMEFMTASFHATTIKKFGPGFINIPGIGTRFTHSRAAMYALGDEIKLCKARAGIPADHTEWEYKHAESVYREYMRTPITDVKGHLGRYLCATNSSDSLARDDSYLVALHESLGSVTYEDVYTRSTMEYAAQPEMPAPVEAPVQRKRRISADDLDLATKIQRLMNR.

This is an uncharacterized protein from Ictaluridae (bullhead catfishes).